We begin with the raw amino-acid sequence, 307 residues long: Ribosomal protein L11 methyltransferase (307 aa).

S-adenosyl-L-methionine-binding residues include threonine 154, glycine 178, aspartate 200, and asparagine 242.

This sequence belongs to the methyltransferase superfamily. PrmA family.

The protein resides in the cytoplasm. It catalyses the reaction L-lysyl-[protein] + 3 S-adenosyl-L-methionine = N(6),N(6),N(6)-trimethyl-L-lysyl-[protein] + 3 S-adenosyl-L-homocysteine + 3 H(+). Methylates ribosomal protein L11. In Syntrophotalea carbinolica (strain DSM 2380 / NBRC 103641 / GraBd1) (Pelobacter carbinolicus), this protein is Ribosomal protein L11 methyltransferase.